The primary structure comprises 356 residues: Dual-specificity RNA methyltransferase RlmN (356 aa).

The active-site Proton acceptor is Glu92. A Radical SAM core domain is found at 98–327; the sequence is EKNRGTLCIS…HQGIRTMTRR (230 aa). A disulfide bond links Cys105 and Cys337. The [4Fe-4S] cluster site is built by Cys112, Cys116, and Cys119. Residues 162 to 163, Ser194, 216 to 218, and Asn294 contribute to the S-adenosyl-L-methionine site; these read GE and SLH. Cys337 acts as the S-methylcysteine intermediate in catalysis.

The protein belongs to the radical SAM superfamily. RlmN family. It depends on [4Fe-4S] cluster as a cofactor.

Its subcellular location is the cytoplasm. It catalyses the reaction adenosine(2503) in 23S rRNA + 2 reduced [2Fe-2S]-[ferredoxin] + 2 S-adenosyl-L-methionine = 2-methyladenosine(2503) in 23S rRNA + 5'-deoxyadenosine + L-methionine + 2 oxidized [2Fe-2S]-[ferredoxin] + S-adenosyl-L-homocysteine. The enzyme catalyses adenosine(37) in tRNA + 2 reduced [2Fe-2S]-[ferredoxin] + 2 S-adenosyl-L-methionine = 2-methyladenosine(37) in tRNA + 5'-deoxyadenosine + L-methionine + 2 oxidized [2Fe-2S]-[ferredoxin] + S-adenosyl-L-homocysteine. Functionally, specifically methylates position 2 of adenine 2503 in 23S rRNA and position 2 of adenine 37 in tRNAs. m2A2503 modification seems to play a crucial role in the proofreading step occurring at the peptidyl transferase center and thus would serve to optimize ribosomal fidelity. The protein is Dual-specificity RNA methyltransferase RlmN of Ruthia magnifica subsp. Calyptogena magnifica.